The sequence spans 481 residues: G-protein coupled receptor 37-like 1 (481 aa).

The first 25 residues, 1–25 (MRWLWPLAVSLAVILAVGLSRVSGG), serve as a signal peptide directing secretion. Disordered regions lie at residues 26–58 (APLHLGRHRAETQEQQSRSKRGTEDEEAKGVQQ) and 70–108 (PIHPAGLQPTKPLVATSPNPGKDGGTPDSGQELRGNLTG). The Extracellular segment spans residues 26–134 (APLHLGRHRA…ESSYSAYAIM (109 aa)). O-linked (GalNAc...) threonine glycosylation is found at Thr-79 and Thr-85. Ser-86 carries O-linked (GalNAc...) serine glycosylation. Thr-95 carries O-linked (GalNAc...) threonine glycosylation. The N-linked (GlcNAc...) asparagine glycan is linked to Asn-105. Thr-107 carries an O-linked (GalNAc...) threonine glycan. Residues 135–155 (LLALVVFAVGIVGNLSVMCIV) form a helical membrane-spanning segment. At 156–167 (WHSYYLKSAWNS) the chain is on the cytoplasmic side. The chain crosses the membrane as a helical span at residues 168 to 188 (ILASLALWDFLVLFFCLPIVI). Topologically, residues 189-205 (FNEITKQRLLGDVSCRA) are extracellular. Cys-203 and Cys-286 are oxidised to a cystine. Residues 206 to 226 (VPFMEVSSLGVTTFSLCALGI) traverse the membrane as a helical segment. The Cytoplasmic portion of the chain corresponds to 227-251 (DRFHVATSTLPKVRPIERCQSILAK). The helical transmembrane segment at 252–272 (LAVIWVGSMTLAVPELLLWQL) threads the bilayer. The Extracellular segment spans residues 273 to 310 (AQEPAPTMGTLDSCIMKPSASLPESLYSLVMTYQNARM). Residues 311-331 (WWYFGCYFCLPILFTVTCQLV) traverse the membrane as a helical segment. Residues 332 to 361 (TWRVRGPPGRKSECRASKHEQCESQLNSTV) are Cytoplasmic-facing. Residues 362-382 (VGLTVVYAFCTLPENVCNIVV) form a helical membrane-spanning segment. Over 383–398 (AYLSTELTRQTLDLLG) the chain is Extracellular. Residues 399–419 (LINQFSTFFKGAITPVLLLCI) form a helical membrane-spanning segment. Residues 420-481 (CRPLGQAFLD…PPLLPLGTPC (62 aa)) are Cytoplasmic-facing. Ser-471 carries the post-translational modification Phosphoserine. Position 479 is a phosphothreonine (Thr-479).

The protein belongs to the G-protein coupled receptor 1 family. As to quaternary structure, interacts with the PTCH1 receptor. In terms of processing, O-glycosylated. Post-translationally, undergoes metalloprotease-mediated cleavage which reduces its constitutive activity. Ubiquitinated. In terms of tissue distribution, expressed in primary cortical astrocytes (at protein level). Expressed in the central nervous system.

The protein localises to the cell membrane. It localises to the cell projection. Its subcellular location is the cilium membrane. Functionally, G-protein coupled receptor. Has been shown to bind the neuroprotective and glioprotective factor prosaposin (PSAP), leading to endocytosis followed by an ERK phosphorylation cascade. However, other studies have shown that prosaposin does not increase activity. It has been suggested that GPR37L1 is a constitutively active receptor which signals through the guanine nucleotide-binding protein G(s) subunit alpha. Participates in the regulation of postnatal cerebellar development by modulating the Shh pathway. Regulates baseline blood pressure in females and protects against cardiovascular stress in males. Mediates inhibition of astrocyte glutamate transporters and reduction in neuronal N-methyl-D-aspartate receptor activity. The sequence is that of G-protein coupled receptor 37-like 1 (GPR37L1) from Homo sapiens (Human).